We begin with the raw amino-acid sequence, 64 residues long: Crotamine CRO3 (64 aa).

A signal peptide spans 1–22; sequence MILYLLFAFLFLAFLSEPGNAY. Intrachain disulfides connect Cys25/Cys57, Cys32/Cys51, and Cys39/Cys58.

This sequence belongs to the crotamine-myotoxin family. As to quaternary structure, monomer. In terms of tissue distribution, expressed by the venom gland.

The protein localises to the secreted. Cationic peptide that possesses multiple functions. It acts as a cell-penetrating peptide (CPP), and as a potent voltage-gated potassium channel (Kv) inhibitor. It exhibits antimicrobial activities, hind limb paralysis, and severe muscle necrosis by a non-enzymatic mechanism. In Crotalus durissus terrificus (South American rattlesnake), this protein is Crotamine CRO3 (CRO3).